A 404-amino-acid polypeptide reads, in one-letter code: Glucoside xylosyltransferase 1 (404 aa).

Topologically, residues 1–6 (MRRYLR) are cytoplasmic. A helical; Signal-anchor for type II membrane protein transmembrane segment spans residues 7 to 29 (VVGLCLACGFCSLLYAFSQLAVS). Topologically, residues 30–404 (LEEGAAGGRR…NRYDTPPKER (375 aa)) are lumenal. Asparagine 201 carries N-linked (GlcNAc...) asparagine glycosylation.

It belongs to the glycosyltransferase 8 family.

The protein localises to the membrane. It carries out the reaction 3-O-(beta-D-glucosyl)-L-seryl-[EGF-like domain protein] + UDP-alpha-D-xylose = 3-O-[alpha-D-xylosyl-(1-&gt;3)-beta-D-glucosyl]-L-seryl-[EGF-like domain protein] + UDP + H(+). In terms of biological role, glycosyltransferase which elongates the O-linked glucose attached to EGF-like repeats in the extracellular domain of Notch proteins by catalyzing the addition of xylose. In Mus musculus (Mouse), this protein is Glucoside xylosyltransferase 1 (Gxylt1).